We begin with the raw amino-acid sequence, 1242 residues long: DNA-directed RNA polymerase RPB2 homolog (1242 aa).

Residues 1180–1201 (CRNCGEPAIYNASHPIYKCMNC) form a C4-type zinc finger.

This sequence belongs to the RNA polymerase beta chain family. In terms of assembly, part of the viral DNA-directed RNA polymerase that consists of 8 polII-like subunits (RPB1, RPB2, RPB3, RPB5, RPB6, RPB7, RPB9, RPB10), a capping enzyme and a termination factor.

The protein resides in the host cytoplasm. It is found in the virion. It catalyses the reaction RNA(n) + a ribonucleoside 5'-triphosphate = RNA(n+1) + diphosphate. Functionally, catalytic component of the DNA-directed RNA polymerase (RNAP) that catalyzes the transcription in the cytoplasm of viral DNA into RNA using the four ribonucleoside triphosphates as substrates. Forms the polymerase active center together with RPB1. Part of the core element with the central large cleft, the clamp element that moves to open and close the cleft and the jaws that are thought to grab the incoming DNA template. This chain is DNA-directed RNA polymerase RPB2 homolog, found in Ornithodoros (relapsing fever ticks).